The primary structure comprises 274 residues: Glycerol uptake facilitator protein (274 aa).

2 helical membrane-spanning segments follow: residues 3–23 (AFWG…GVCA) and 38–58 (IVVV…VGGI). An NPA 1 motif is present at residues 64–66 (NPA). A run of 3 helical transmembrane segments spans residues 82 to 102 (VPVY…IIYL), 131 to 151 (FANV…ILAI), and 164 to 184 (IVGF…GYAI). An NPA 2 motif is present at residues 185–187 (NPA). A helical transmembrane segment spans residues 238 to 258 (ITSSFWIVSVILVVVLLGLYV).

Belongs to the MIP/aquaporin (TC 1.A.8) family.

It localises to the cell membrane. It catalyses the reaction glycerol(in) = glycerol(out). In terms of biological role, mediates glycerol diffusion across the cytoplasmic membrane via a pore-type mechanism. In Bacillus subtilis (strain 168), this protein is Glycerol uptake facilitator protein (glpF).